A 187-amino-acid chain; its full sequence is ATP synthase subunit b 2 (187 aa).

Residues 39–61 (SQLVWLVLSFAALYLLMSRVALP) traverse the membrane as a helical segment.

It belongs to the ATPase B chain family. In terms of assembly, F-type ATPases have 2 components, F(1) - the catalytic core - and F(0) - the membrane proton channel. F(1) has five subunits: alpha(3), beta(3), gamma(1), delta(1), epsilon(1). F(0) has three main subunits: a(1), b(2) and c(10-14). The alpha and beta chains form an alternating ring which encloses part of the gamma chain. F(1) is attached to F(0) by a central stalk formed by the gamma and epsilon chains, while a peripheral stalk is formed by the delta and b chains.

The protein resides in the cell inner membrane. F(1)F(0) ATP synthase produces ATP from ADP in the presence of a proton or sodium gradient. F-type ATPases consist of two structural domains, F(1) containing the extramembraneous catalytic core and F(0) containing the membrane proton channel, linked together by a central stalk and a peripheral stalk. During catalysis, ATP synthesis in the catalytic domain of F(1) is coupled via a rotary mechanism of the central stalk subunits to proton translocation. In terms of biological role, component of the F(0) channel, it forms part of the peripheral stalk, linking F(1) to F(0). The chain is ATP synthase subunit b 2 from Parvibaculum lavamentivorans (strain DS-1 / DSM 13023 / NCIMB 13966).